We begin with the raw amino-acid sequence, 258 residues long: MAPKRGGRAPVPAKKKTEKVTNPLFEKRPKQFGIGGALPPKKDLHRFVKWPKVVRIQRQRRILKQRLKVPPALNQFTRTLDKNLATNLFKMLLKYRPEDKAAKKERLLKRAQAEAEGKTVEAKKPIVVKYGLNHVTYLIEQSKAQLVVIAHDVDPIELVVWLPALCRKMEVPYCIVKGKARLGSIVHKKTASVLCLTTVKNEDKLEFSKILEAIKANFNDKFDEVRKKWGGGVMGSKSQAKTKAREKLLAKEAAQRMT.

The segment at 1 to 20 is disordered; sequence MAPKRGGRAPVPAKKKTEKV.

The protein belongs to the eukaryotic ribosomal protein eL8 family.

This chain is Large ribosomal subunit protein eL8z (RPL7A-1), found in Oryza sativa subsp. japonica (Rice).